We begin with the raw amino-acid sequence, 217 residues long: Lipoprotein CseA (217 aa).

An N-terminal signal peptide occupies residues 1-34 (MRGLGTESLRARGALKAAIAAVAGLAVLGLSVSA). Residue Cys35 is the site of N-palmitoyl cysteine attachment. Residue Cys35 is the site of S-diacylglycerol cysteine attachment. 2 disordered regions span residues 39 to 66 (GTGA…SPSK) and 192 to 217 (FSEE…PAPN).

Its subcellular location is the cell membrane. In terms of biological role, may be involved in the stabilization of the cell envelope or may interact with the sensor protein CseC to modulate its activity, in response to cell envelope stress. This is Lipoprotein CseA (cseA) from Streptomyces avermitilis (strain ATCC 31267 / DSM 46492 / JCM 5070 / NBRC 14893 / NCIMB 12804 / NRRL 8165 / MA-4680).